Reading from the N-terminus, the 43-residue chain is Oxygen-evolving enhancer protein 2 (43 aa).

This sequence belongs to the PsbP family.

The protein localises to the plastid. It localises to the chloroplast thylakoid membrane. In terms of biological role, may be involved in the regulation of photosystem II. In Physcomitrium patens (Spreading-leaved earth moss), this protein is Oxygen-evolving enhancer protein 2.